Reading from the N-terminus, the 146-residue chain is Small ribosomal subunit protein bS16 (146 aa).

The span at 84–102 (SHLEAQKAAVERLGRRKDY) shows a compositional bias: basic and acidic residues. The tract at residues 84–146 (SHLEAQKAAV…DAPAAEATTE (63 aa)) is disordered. Low complexity predominate over residues 110 to 119 (APKAAPVAEA). Over residues 120–130 (PAEEAPAEEPA) the composition is skewed to acidic residues. Positions 131–146 (AEASTDDAPAAEATTE) are enriched in low complexity.

The protein belongs to the bacterial ribosomal protein bS16 family.

The polypeptide is Small ribosomal subunit protein bS16 (Rhodopirellula baltica (strain DSM 10527 / NCIMB 13988 / SH1)).